Reading from the N-terminus, the 365-residue chain is Phospho-N-acetylmuramoyl-pentapeptide-transferase (365 aa).

10 helical membrane passes run Tyr22–Gly42, Thr74–Leu94, Ser95–Phe115, Lys134–Ser154, Leu169–Ser189, Gly201–Gln221, Leu240–Phe260, Phe268–Ile288, Leu292–Val312, and Lys342–Ile362.

Belongs to the glycosyltransferase 4 family. MraY subfamily. Requires Mg(2+) as cofactor.

It localises to the cell inner membrane. The enzyme catalyses UDP-N-acetyl-alpha-D-muramoyl-L-alanyl-gamma-D-glutamyl-meso-2,6-diaminopimeloyl-D-alanyl-D-alanine + di-trans,octa-cis-undecaprenyl phosphate = di-trans,octa-cis-undecaprenyl diphospho-N-acetyl-alpha-D-muramoyl-L-alanyl-D-glutamyl-meso-2,6-diaminopimeloyl-D-alanyl-D-alanine + UMP. Its pathway is cell wall biogenesis; peptidoglycan biosynthesis. In terms of biological role, catalyzes the initial step of the lipid cycle reactions in the biosynthesis of the cell wall peptidoglycan: transfers peptidoglycan precursor phospho-MurNAc-pentapeptide from UDP-MurNAc-pentapeptide onto the lipid carrier undecaprenyl phosphate, yielding undecaprenyl-pyrophosphoryl-MurNAc-pentapeptide, known as lipid I. The protein is Phospho-N-acetylmuramoyl-pentapeptide-transferase of Francisella philomiragia subsp. philomiragia (strain ATCC 25017 / CCUG 19701 / FSC 153 / O#319-036).